The following is an 88-amino-acid chain: Putative defensin-like protein 228 (88 aa).

The first 27 residues, 1 to 27, serve as a signal peptide directing secretion; that stretch reads MMKSAILLMVSCVFMFLVVSYIQDVEG. 4 disulfides stabilise this stretch: C32-C88, C42-C66, C50-C82, and C64-C84.

The protein belongs to the DEFL family.

The protein resides in the secreted. This chain is Putative defensin-like protein 228 (SCRL3), found in Arabidopsis thaliana (Mouse-ear cress).